Reading from the N-terminus, the 378-residue chain is UPF0754 membrane protein Bcer98_0694 (378 aa).

A helical transmembrane segment spans residues 358–378; that stretch reads LGALLGGTIGLMQGILLLFLM.

The protein belongs to the UPF0754 family.

The protein resides in the cell membrane. In Bacillus cytotoxicus (strain DSM 22905 / CIP 110041 / 391-98 / NVH 391-98), this protein is UPF0754 membrane protein Bcer98_0694.